A 467-amino-acid chain; its full sequence is MTIDIKDISEKDRNTVLHPFTQLKDFATGKLREPTIVETGKGIRIQDARGNQLIDGFAGLYCVNVGYGRTEVAEAISRQAYRLAYYHSYAAHTTDELAILSDRLVKMAPGKMSKVFYGMSGSDANETQAKLVWYYNNLRGKPTKKKIISRERGYHGCSVVSGSMTGMSFYHDHMDLPLPQICHTGVPHHYWGANPGETEREFSARRAAELDEMIETLGPDNVGAFIAEPVLGTGGITPPPEGYWEAIQAVLKKHDVLLIADEVITGFGRTGSMFGSQHYGIEPDLITVAKGLTSAYFPLSASIVGEKVYKVLEDGADRVGAFSHGYTYSGHPIGAAAANAVLDIVEKEDLPGNAREVGGYFQAQLKEKFAQLPIVGEVRGVGLMGAIEFVGDRENKKRFDPLLKVGARVSKAARDRGLIARAMPHGDILGFAPPLVTTKEEVDEIVAMAEKAVRSVMDELVRDGQKL.

Residue K290 is modified to N6-(pyridoxal phosphate)lysine.

The protein belongs to the class-III pyridoxal-phosphate-dependent aminotransferase family. Pyridoxal 5'-phosphate serves as cofactor.

This is an uncharacterized protein from Sinorhizobium fredii (strain NBRC 101917 / NGR234).